The following is a 251-amino-acid chain: uncharacterized protein (251 aa).

This is an uncharacterized protein from Acanthamoeba polyphaga mimivirus (APMV).